We begin with the raw amino-acid sequence, 414 residues long: Esterase FrsA (414 aa).

Belongs to the FrsA family.

It carries out the reaction a carboxylic ester + H2O = an alcohol + a carboxylate + H(+). Functionally, catalyzes the hydrolysis of esters. In Escherichia coli O45:K1 (strain S88 / ExPEC), this protein is Esterase FrsA.